The following is a 139-amino-acid chain: ATP synthase epsilon chain, chloroplastic (139 aa).

Belongs to the ATPase epsilon chain family. In terms of assembly, F-type ATPases have 2 components, CF(1) - the catalytic core - and CF(0) - the membrane proton channel. CF(1) has five subunits: alpha(3), beta(3), gamma(1), delta(1), epsilon(1). CF(0) has three main subunits: a, b and c.

It localises to the plastid. The protein localises to the chloroplast thylakoid membrane. Its function is as follows. Produces ATP from ADP in the presence of a proton gradient across the membrane. The sequence is that of ATP synthase epsilon chain, chloroplastic from Welwitschia mirabilis (Tree tumbo).